The sequence spans 214 residues: Pyridoxine/pyridoxamine 5'-phosphate oxidase (214 aa).

Substrate is bound by residues 9–12 (RKSY) and lysine 67. Residues 62–67 (RIVLLK), 77–78 (YT), arginine 83, lysine 84, and glutamine 106 contribute to the FMN site. Substrate contacts are provided by tyrosine 124, arginine 128, and serine 132. Residues 141 to 142 (QS) and tryptophan 186 contribute to the FMN site. 192–194 (RLH) lines the substrate pocket. Arginine 196 is an FMN binding site.

It belongs to the pyridoxamine 5'-phosphate oxidase family. Homodimer. Requires FMN as cofactor.

It catalyses the reaction pyridoxamine 5'-phosphate + O2 + H2O = pyridoxal 5'-phosphate + H2O2 + NH4(+). It carries out the reaction pyridoxine 5'-phosphate + O2 = pyridoxal 5'-phosphate + H2O2. Its pathway is cofactor metabolism; pyridoxal 5'-phosphate salvage; pyridoxal 5'-phosphate from pyridoxamine 5'-phosphate: step 1/1. The protein operates within cofactor metabolism; pyridoxal 5'-phosphate salvage; pyridoxal 5'-phosphate from pyridoxine 5'-phosphate: step 1/1. Catalyzes the oxidation of either pyridoxine 5'-phosphate (PNP) or pyridoxamine 5'-phosphate (PMP) into pyridoxal 5'-phosphate (PLP). The protein is Pyridoxine/pyridoxamine 5'-phosphate oxidase of Leptospira interrogans serogroup Icterohaemorrhagiae serovar copenhageni (strain Fiocruz L1-130).